The primary structure comprises 260 residues: Thiazole synthase (260 aa).

K96 serves as the catalytic Schiff-base intermediate with DXP. 1-deoxy-D-xylulose 5-phosphate is bound by residues G157, A184–G185, and N206–T207.

The protein belongs to the ThiG family. Homotetramer. Forms heterodimers with either ThiH or ThiS.

The protein resides in the cytoplasm. It catalyses the reaction [ThiS sulfur-carrier protein]-C-terminal-Gly-aminoethanethioate + 2-iminoacetate + 1-deoxy-D-xylulose 5-phosphate = [ThiS sulfur-carrier protein]-C-terminal Gly-Gly + 2-[(2R,5Z)-2-carboxy-4-methylthiazol-5(2H)-ylidene]ethyl phosphate + 2 H2O + H(+). Its pathway is cofactor biosynthesis; thiamine diphosphate biosynthesis. In terms of biological role, catalyzes the rearrangement of 1-deoxy-D-xylulose 5-phosphate (DXP) to produce the thiazole phosphate moiety of thiamine. Sulfur is provided by the thiocarboxylate moiety of the carrier protein ThiS. In vitro, sulfur can be provided by H(2)S. In Rhodopseudomonas palustris (strain BisB5), this protein is Thiazole synthase.